The sequence spans 1637 residues: Stress response protein NST1 (1637 aa).

Residues 1–17 show a composition bias toward polar residues; sequence MSNRGNLNLNLPPSSGK. Disordered regions lie at residues 1-155, 221-252, 442-494, 504-523, 681-734, 746-825, 871-1036, 1049-1075, 1176-1299, and 1512-1534; these read MSNR…EITN, HQAS…HASH, LKMN…SQQL, KNNL…PLQH, KTPY…EIDD, QHHH…EEEK, AKRE…SKHV, SKQN…EENP, NSSQ…GAII, and YTQQ…QYPL. The segment covering 24 to 33 has biased composition (basic and acidic residues); the sequence is VHFELSKEKN. Composition is skewed to low complexity over residues 34 to 53 and 64 to 113; these read NSTN…SNNT and NDNN…QQQS. A compositionally biased stretch (basic residues) spans 124-134; sequence AKKRKKKKSKK. Residues 135-155 are compositionally biased toward low complexity; it reads SSNNNGNNSNTNSNSNSEITN. Positions 446–470 are enriched in low complexity; that stretch reads QRQQSQSQSQSQSQQQRDVQTAQSQ. Positions 471-487 are enriched in polar residues; sequence VLSKDSSLKNANTSMNK. A compositionally biased stretch (polar residues) spans 692–706; the sequence is PAATSQDREQQVQPN. Over residues 717–734 the composition is skewed to basic and acidic residues; that stretch reads DHEHEHEHEHEHEHEIDD. Acidic residues predominate over residues 754–808; sequence EEYDEEDEEDDEEYEYGDDEEEEDEEDEEEGEDEELEEVVEDDVDEEILDDEEEF. The stretch at 855–1023 forms a coiled coil; sequence KDNTRKLFEE…KQLEKEAAVS (169 aa). Composition is skewed to basic and acidic residues over residues 871–887 and 896–1021; these read AKRE…EKAK and AKEE…KEAA. Residues 1049–1063 are compositionally biased toward polar residues; the sequence is SKQNQAQNGNQSHLP. Low complexity predominate over residues 1176–1199; the sequence is NSSQGSPWTTNSTLSSNLGSTGLS. The span at 1201–1228 shows a compositional bias: polar residues; sequence GQGQTVSGVNTNLPSSIGITSGGASQIF. The span at 1234–1257 shows a compositional bias: low complexity; that stretch reads PQLQPHQPQQQQQQQQQQQQQQQQ. Residues 1258 to 1267 are compositionally biased toward polar residues; the sequence is NYFSPFNSFS. Low complexity-rich tracts occupy residues 1282–1299 and 1514–1534; these read TTNI…GAII and QQQQ…QYPL.

This sequence belongs to the NST1 family.

It localises to the cytoplasm. Its function is as follows. May act as a negative regulator of salt tolerance. The chain is Stress response protein NST1 (NST1) from Lodderomyces elongisporus (strain ATCC 11503 / CBS 2605 / JCM 1781 / NBRC 1676 / NRRL YB-4239) (Yeast).